The chain runs to 339 residues: Lipoate-protein ligase A (339 aa).

In terms of domain architecture, BPL/LPL catalytic spans 29–216 (DPSQQVLFLW…SFENFYAGKA (188 aa)). Residues arginine 71, 76–79 (GAVF), and lysine 134 contribute to the ATP site. Lysine 134 provides a ligand contact to (R)-lipoate.

The protein belongs to the LplA family. In terms of assembly, monomer.

The protein localises to the cytoplasm. The catalysed reaction is L-lysyl-[lipoyl-carrier protein] + (R)-lipoate + ATP = N(6)-[(R)-lipoyl]-L-lysyl-[lipoyl-carrier protein] + AMP + diphosphate + H(+). The protein operates within protein modification; protein lipoylation via exogenous pathway; protein N(6)-(lipoyl)lysine from lipoate: step 1/2. It participates in protein modification; protein lipoylation via exogenous pathway; protein N(6)-(lipoyl)lysine from lipoate: step 2/2. Catalyzes both the ATP-dependent activation of exogenously supplied lipoate to lipoyl-AMP and the transfer of the activated lipoyl onto the lipoyl domains of lipoate-dependent enzymes. The protein is Lipoate-protein ligase A of Bdellovibrio bacteriovorus (strain ATCC 15356 / DSM 50701 / NCIMB 9529 / HD100).